The following is a 328-amino-acid chain: Alpha-tubulin N-acetyltransferase 2 (328 aa).

Residues 5–185 enclose the N-acetyltransferase domain; sequence SQVALLPKLS…NNFVVFHRYF (181 aa). Residues 119–132 and 155–164 each bind acetyl-CoA; these read FFVDTSFQRKGFGK and SVKFLAFLRK. 2 disordered regions span residues 219–261 and 282–328; these read EYQS…PGKK and GGDP…TPEH. Positions 238 to 248 are enriched in pro residues; sequence TPPPPLPPPLV. Residues 312-328 are compositionally biased toward polar residues; that stretch reads PTRSGVQYNIISGTPEH.

This sequence belongs to the acetyltransferase ATAT1 family.

It carries out the reaction L-lysyl-[alpha-tubulin] + acetyl-CoA = N(6)-acetyl-L-lysyl-[alpha-tubulin] + CoA + H(+). Its function is as follows. Specifically acetylates 'Lys-40' in alpha-tubulin on the lumenal side of microtubules. Promotes microtubule destabilization and accelerates microtubule dynamics; this activity may be independent of acetylation activity. Acetylates alpha-tubulin with a slow enzymatic rate, due to a catalytic site that is not optimized for acetyl transfer. Enters the microtubule through each end and diffuses quickly throughout the lumen of microtubules. Acetylates only long/old microtubules because of its slow acetylation rate since it does not have time to act on dynamically unstable microtubules before the enzyme is released. The chain is Alpha-tubulin N-acetyltransferase 2 from Trypanosoma cruzi (strain CL Brener).